The following is a 623-amino-acid chain: Chaperone protein HtpG (623 aa).

The a; substrate-binding stretch occupies residues 1–336; it reads MVSKQQTMGF…ASDLPLNISR (336 aa). Positions 337-550 are b; the sequence is EILQDNKQVE…EQDMGLEMQR (214 aa). The interval 551–623 is c; the sequence is ILQAAGQQVP…NRVNRLLVSS (73 aa).

This sequence belongs to the heat shock protein 90 family. Homodimer.

It localises to the cytoplasm. Molecular chaperone. Has ATPase activity. In Legionella pneumophila subsp. pneumophila (strain Philadelphia 1 / ATCC 33152 / DSM 7513), this protein is Chaperone protein HtpG.